A 430-amino-acid polypeptide reads, in one-letter code: Adenylosuccinate synthetase (430 aa).

Residues 13-19 and 41-43 each bind GTP; these read GDEGKGK and GHT. D14 (proton acceptor) is an active-site residue. The Mg(2+) site is built by D14 and G41. IMP is bound by residues 14-17, 39-42, T130, R144, Q225, T240, and R304; these read DEGK and NAGH. The Proton donor role is filled by H42. 300 to 306 serves as a coordination point for substrate; it reads STTGRAR. GTP contacts are provided by residues R306, 332 to 334, and 414 to 416; these read KLD and STG.

The protein belongs to the adenylosuccinate synthetase family. As to quaternary structure, homodimer. The cofactor is Mg(2+).

It localises to the cytoplasm. It catalyses the reaction IMP + L-aspartate + GTP = N(6)-(1,2-dicarboxyethyl)-AMP + GDP + phosphate + 2 H(+). It functions in the pathway purine metabolism; AMP biosynthesis via de novo pathway; AMP from IMP: step 1/2. Functionally, plays an important role in the de novo pathway of purine nucleotide biosynthesis. Catalyzes the first committed step in the biosynthesis of AMP from IMP. This is Adenylosuccinate synthetase from Pseudomonas entomophila (strain L48).